The primary structure comprises 121 residues: Large ribosomal subunit protein bL12 (121 aa).

The protein belongs to the bacterial ribosomal protein bL12 family. As to quaternary structure, homodimer. Part of the ribosomal stalk of the 50S ribosomal subunit. Forms a multimeric L10(L12)X complex, where L10 forms an elongated spine to which 2 to 4 L12 dimers bind in a sequential fashion. Binds GTP-bound translation factors.

Functionally, forms part of the ribosomal stalk which helps the ribosome interact with GTP-bound translation factors. Is thus essential for accurate translation. The sequence is that of Large ribosomal subunit protein bL12 from Clostridium perfringens (strain ATCC 13124 / DSM 756 / JCM 1290 / NCIMB 6125 / NCTC 8237 / Type A).